The sequence spans 671 residues: Gametogenetin-binding protein 2-like (671 aa).

2 disordered regions span residues 372-489 (REQK…ARVQ) and 532-562 (VRDS…SEVS). Over residues 373-384 (EQKKLKKKKKKD) the composition is skewed to basic residues. Residues 385–395 (EKKNLLHRQCD) are compositionally biased toward basic and acidic residues. The span at 396–420 (DTEANESDEEEEELRNEELDLEEES) shows a compositional bias: acidic residues. The segment covering 455–472 (TKSKPKKQSKKKKQKKAA) has biased composition (basic residues). Composition is skewed to polar residues over residues 476-486 (MGNQKQMQATA) and 546-557 (GSRTSSAISSPE).

The protein is Gametogenetin-binding protein 2-like of Drosophila melanogaster (Fruit fly).